We begin with the raw amino-acid sequence, 231 residues long: Maleylacetoacetate isomerase maiA (231 aa).

The GST N-terminal domain maps to 7–93 (PKVTLYTYFR…YLEEITPASS (87 aa)). In terms of domain architecture, GST C-terminal spans 102 to 224 (NPEARAVVRT…HWRTQPDTPE (123 aa)).

It belongs to the GST superfamily. Zeta family.

The catalysed reaction is 4-maleylacetoacetate = 4-fumarylacetoacetate. It participates in amino-acid degradation; L-phenylalanine degradation; acetoacetate and fumarate from L-phenylalanine: step 5/6. Its function is as follows. Maleylacetoacetate isomerase; part of the L-tyrosine degradation gene cluster that mediates the biosynthesis of the brownish pigment pyomelanin as an alternative melanin. The 4-hydroxyphenylpyruvate dioxygenase hppD catalyzes the conversion of 4-hydroxyphenylpyruvate to homogentisic acid (HGA). The protein hmgX is crucial for this conversion and thus, probably functions as an accessory factor to mediate specific activity of hppD. The homogentisate 1,2-dioxygenase hmgA is then involved in the cleavage of the aromatic ring of HGA and its conversion to 4-maleylacetoacetate. When hmgA activity is lowered by the cell wall integrity (CWI) signaling pathway, HGA accumulates and leads to the production of pyomelanin through benzoquinone acetic acid after oxidation and polymerization. On the opposite, in non-stress conditions, both hppD and hmgA activities are balanced and HGA is degraded into 4-maleylacetoacetate. 4-maleylacetoacetate is further converted to 4-fumarylacetoacetate by the maleylacetoacetate isomerase maiA, which is degraded into fumarate and acetoacetate by the fumarylacetoacetase fahA. In Aspergillus fumigatus (strain ATCC MYA-4609 / CBS 101355 / FGSC A1100 / Af293) (Neosartorya fumigata), this protein is Maleylacetoacetate isomerase maiA.